A 738-amino-acid chain; its full sequence is MLRAASNFRAVANREFACAKRQLSKTTRKNATAAATRPGVPRDEREGKEIYTTVGIDHNEPKFDKILIANRGEIACRVIKTAKAMGIKTVAVHSDVDSNSLHVKMADEAICVGEAPTAKSYLRVDRILQAVEDTGAQAVHPGYGFLSENTKFAAELEKAGAKFIGPNSKAILDMGDKIHSKKIATAARVSMIPGYDGEIPEEDFCVKVSREIGYPVMIKASAGGGGKGMRVAWNDKQAREGYRLSKQEAASSFGDDRMLVEKFIDNPRHIEMQILCDKHGNALWLNERECSIQRRNQKVIEEAPSSFVPPEMRRKMGEQAVQLAKAVGYDSAGTVEFLVDSQRNFYFLEMNTRLQVEHPITECITGIDIVQQMLRVAYGHSLPLTQEQVPLNGWAFESRVYAEDPYKGFGLPSVGRLSKYVEPRHVDGVRCDSGIREGSEISIYYDPLICKLVTHGDNRQQALDRMQEALDNYVIRGVTHNIPLLRDIVQEKRFRSGDITTKYLPEVYPEGFQGTVLTHAEEKTVIAFAAALNARKLARANQFLNQNRQRSTHVASFSKTYKFVSSLPAKEGQRPTEHAVEVSFVDGDANKAKVSIGGKVIDISGNLSLSLPVNSIEVNGEHITTQIVGKRAGEITVLYKGTPFKVQVLPEQAVKYLQYMKEKAKVDLSTVVLSPMPGAIKNVNVKPGDMVSEGQELVVMEAMKMQNSLHAGKTGRVKAVNVKVGATVDEGEVLVELE.

The region spanning 62–509 (KFDKILIANR…TTKYLPEVYP (448 aa)) is the Biotin carboxylation domain. ATP contacts are provided by residues Lys-177, 209-270 (SREI…PRHI), Glu-261, and Asn-296. One can recognise an ATP-grasp domain in the interval 181 to 378 (KKIATAARVS…IVQQMLRVAY (198 aa)). Residues Glu-336, Glu-349, and Asn-351 each contribute to the Mg(2+) site. The Mn(2+) site is built by Glu-336, Glu-349, and Asn-351. The active site involves Arg-353. Phe-409 contacts biotin. The 76-residue stretch at 663 to 738 (KAKVDLSTVV…DEGEVLVELE (76 aa)) folds into the Biotinyl-binding domain. Position 704 is an N6-biotinyllysine (Lys-704).

In terms of assembly, the holoenzyme is a dodecamer composed of 6 alpha subunits and 6 beta subunits. Interacts with sir-2.2. Biotin is required as a cofactor. Mg(2+) serves as cofactor. It depends on Mn(2+) as a cofactor. The biotin cofactor is covalently attached to the C-terminal biotinyl-binding domain and is required for the catalytic activity.

Its subcellular location is the mitochondrion matrix. The catalysed reaction is propanoyl-CoA + hydrogencarbonate + ATP = (S)-methylmalonyl-CoA + ADP + phosphate + H(+). The enzyme catalyses butanoyl-CoA + hydrogencarbonate + ATP = (2S)-ethylmalonyl-CoA + ADP + phosphate + H(+). It functions in the pathway metabolic intermediate metabolism; propanoyl-CoA degradation; succinyl-CoA from propanoyl-CoA: step 1/3. Functionally, this is one of the 2 subunits of the biotin-dependent propionyl-CoA carboxylase (PCC), a mitochondrial enzyme involved in the catabolism of odd chain fatty acids, branched-chain amino acids isoleucine, threonine, methionine, and valine and other metabolites. Propionyl-CoA carboxylase catalyzes the carboxylation of propionyl-CoA/propanoyl-CoA to D-methylmalonyl-CoA/(S)-methylmalonyl-CoA. Within the holoenzyme, the alpha subunit catalyzes the ATP-dependent carboxylation of the biotin carried by the biotin carboxyl carrier (BCC) domain, while the beta subunit then transfers the carboxyl group from carboxylated biotin to propionyl-CoA. Propionyl-CoA carboxylase also significantly acts on butyryl-CoA/butanoyl-CoA, which is converted to ethylmalonyl-CoA/(2S)-ethylmalonyl-CoA. Other alternative minor substrates include (2E)-butenoyl-CoA/crotonoyl-CoA. This chain is Propionyl-CoA carboxylase alpha chain, mitochondrial (pcca-1), found in Caenorhabditis briggsae.